We begin with the raw amino-acid sequence, 540 residues long: MNTVVTLPTEQAPQTLENVGRFDRPLIIILDFGSQYSELIARRIRETQVYSEVLSYRTTSEQLRQLNPKGIILSGGPSSVYGDNAPHCDPEIWNLGIPVLGVCYGMQLMVNQLGGEVAKADRGEYGKASLYIDDPTDLLTNVEDGTTMWMSHGDSVTQMPSGFELLAHTENTPCAAIADHERKLYGVQFHPEVVHSIGGIALIRNFVYHICDCEPTWTTAAFVEEAIREIRTRVGEKRVLLALSGGVDSSTLAFLLYKAIGEQLTCVFIDQGFMRKYEPERLVKLFQEQFHIPVEYVNARDRFLAKVAGVTDPEEKRRRIGHEFINVFEETSKRLGHFDYLAQGTLYPDVIESADTNADPQTGERVAVKIKSHHNVGGLPKDLRFKLVEPLRKLFKDEVRKVGRSIGLPEEIVQRQPFPGPGLAIRILGEVTSERLNILRDADLIVRQEINQRGMYHDFWQAFAVLLPIRSVGVMGDQRTYAYPIVLRIVTSEDGMTADWARVPYDVLEVISTRIVNEVKGVNRVVYDITSKPPGTIEWE.

The 191-residue stretch at 26 to 216 folds into the Glutamine amidotransferase type-1 domain; sequence LIIILDFGSQ…VYHICDCEPT (191 aa). C103 serves as the catalytic Nucleophile. Residues H190 and E192 contribute to the active site. Residues 217–415 enclose the GMPS ATP-PPase domain; that stretch reads WTTAAFVEEA…IGLPEEIVQR (199 aa). 244 to 250 contributes to the ATP binding site; that stretch reads SGGVDSS.

As to quaternary structure, homodimer.

It catalyses the reaction XMP + L-glutamine + ATP + H2O = GMP + L-glutamate + AMP + diphosphate + 2 H(+). It functions in the pathway purine metabolism; GMP biosynthesis; GMP from XMP (L-Gln route): step 1/1. In terms of biological role, catalyzes the synthesis of GMP from XMP. In Nostoc punctiforme (strain ATCC 29133 / PCC 73102), this protein is GMP synthase [glutamine-hydrolyzing].